A 488-amino-acid chain; its full sequence is Beta-xylosidase (488 aa).

Glutamate 163 functions as the Proton donor in the catalytic mechanism. Glutamate 275 serves as the catalytic Nucleophile.

The protein belongs to the glycosyl hydrolase 39 family.

The enzyme catalyses Hydrolysis of (1-&gt;4)-beta-D-xylans, to remove successive D-xylose residues from the non-reducing termini.. Beta-xylosidase is an intracellular xylan-degrading enzyme. The protein is Beta-xylosidase (xynB) of Caldicellulosiruptor saccharolyticus (Caldocellum saccharolyticum).